The following is a 102-amino-acid chain: Small ribosomal subunit protein uS10 (102 aa).

Belongs to the universal ribosomal protein uS10 family. Part of the 30S ribosomal subunit.

In terms of biological role, involved in the binding of tRNA to the ribosomes. In Chlorobium phaeobacteroides (strain BS1), this protein is Small ribosomal subunit protein uS10.